The sequence spans 429 residues: Adenylosuccinate synthetase (429 aa).

GTP-binding positions include 12–18 (GDEGKGK) and 40–42 (GHT). The Proton acceptor role is filled by Asp13. Positions 13 and 40 each coordinate Mg(2+). IMP is bound by residues 13-16 (DEGK), 38-41 (NAGH), Thr128, Arg142, Gln223, Thr238, and Arg302. His41 (proton donor) is an active-site residue. 298 to 304 (TTTGRPR) is a substrate binding site. GTP is bound by residues Arg304, 330–332 (SID), and 412–414 (SVG).

The protein belongs to the adenylosuccinate synthetase family. In terms of assembly, homodimer. The cofactor is Mg(2+).

Its subcellular location is the cytoplasm. It catalyses the reaction IMP + L-aspartate + GTP = N(6)-(1,2-dicarboxyethyl)-AMP + GDP + phosphate + 2 H(+). It participates in purine metabolism; AMP biosynthesis via de novo pathway; AMP from IMP: step 1/2. In terms of biological role, plays an important role in the de novo pathway of purine nucleotide biosynthesis. Catalyzes the first committed step in the biosynthesis of AMP from IMP. In Exiguobacterium sp. (strain ATCC BAA-1283 / AT1b), this protein is Adenylosuccinate synthetase.